A 318-amino-acid chain; its full sequence is Xanthocillin biosynthesis cluster transcription factor xanC (318 aa).

Positions 1-27 (MHSQTTKDEQSKDDSSNEKQDAIERRR) are enriched in basic and acidic residues. The tract at residues 1–39 (MHSQTTKDEQSKDDSSNEKQDAIERRRLQNRLSQRNHRR) is disordered. The region spanning 20-52 (QDAIERRRLQNRLSQRNHRRKIRDRIAKLQERV) is the bZIP domain. Positions 25–40 (RRRLQNRLSQRNHRRK) are basic motif. The segment at 41–48 (IRDRIAKL) is leucine-zipper. Disordered regions lie at residues 71–107 (PPAASMMESKPQGDFDSNPLASVSEDPAISNPPQRNV), 123–171 (PSSS…FSLD), and 269–318 (GRHC…SMML). Composition is skewed to low complexity over residues 123–139 (PSSSSLPSPTSPLPFDL) and 147–171 (STNSSPSTLLNSSPSSSQLSPFSLD). A compositionally biased stretch (polar residues) spans 293 to 318 (APSSTPFCPLHPSQSSSLDNYQSMML).

Belongs to the bZIP family.

It is found in the nucleus. Functionally, transcription regulator that specifically up-regulates the gene cluster that mediates the biosynthesis of the isocyanide xanthocillin and its derivatives. This Aspergillus fumigatus (strain ATCC MYA-4609 / CBS 101355 / FGSC A1100 / Af293) (Neosartorya fumigata) protein is Xanthocillin biosynthesis cluster transcription factor xanC.